The following is a 518-amino-acid chain: MAVRLRRVKRANPYDLYRTCATGDCPQDVKDRFEHNTIADKILKWGSAGVFLGGLGIGSTQARPGLGTYSPLGRGGVTGRIPVRGPGSTRPLGRPFSSGPIDTIGAGVRTSVETSVTVPDVVAVLPESPAVITPDSMPVDPGVGGLDISAEIIEEPSLTFVEPHGPEDVAVLDVNPAEHDRSVYLSSSTTHHNPSFQGQVTVYTDIGETSETENLLISGSNIGSSRGEEIQMQLFSGPKTSTPETDAVTKVRGRANWFSKRYYTQTSVRDPTFIQEPQTYFYGFENPAYEPDPFEDSFDVQLASPSEPVQPELRDITHVSAARTFRGESGRVGISRLGQKSSIQTRSGVTVGGRVHFRYSLSTIEDAIEDAGEIELQVTNGSQGPSGSLQHTAETILSEGHDAYVDVDMDSVGSLYSDIDLIDEHSETPHGILVFHDEAETDVVPVIDVSYVRKPLSTIPGSDLWPTNINIQNGPVDVDLQDSILPGIIITDSGVDGTYFLNTYLHPSLHKRKKRRFS.

The Nuclear localization signal signature appears at 2-11; sequence AVRLRRVKRA. Cysteines 20 and 25 form a disulfide. The segment at 68–100 is disordered; it reads TYSPLGRGGVTGRIPVRGPGSTRPLGRPFSSGP. The short motif at 511–517 is the Nuclear localization signal element; sequence KRKKRRF.

This sequence belongs to the papillomaviridae L2 protein family. As to quaternary structure, interacts with major capsid protein L1. Interacts with E2; this interaction inhibits E2 transcriptional activity but not the DNA replication function E2. Interacts with host GADD45GIP1. Interacts with host HSPA8; this interaction is required for L2 nuclear translocation. Interacts with host importins KPNB2 and KPNB3. Forms a complex with importin alpha2-beta1 heterodimers via interaction with the importin alpha2 adapter. Interacts with host DYNLT1; this interaction is essential for virus intracellular transport during entry. Interacts (via C-terminus) with host retromer subunits VPS35 and VPS29. Post-translationally, highly phosphorylated.

It is found in the virion. It localises to the host nucleus. Its subcellular location is the host early endosome. The protein resides in the host Golgi apparatus. Minor protein of the capsid that localizes along the inner surface of the virion, within the central cavities beneath the L1 pentamers. Plays a role in capsid stabilization through interaction with the major capsid protein L1. Once the virion enters the host cell, L2 escorts the genomic DNA into the nucleus by promoting escape from the endosomal compartments and traffic through the host Golgi network. Mechanistically, the C-terminus of L2 possesses a cell-penetrating peptide that protudes from the host endosome, interacts with host cytoplasmic retromer cargo and thereby mediates the capsid delivery to the host trans-Golgi network. Plays a role through its interaction with host dynein in the intracellular microtubule-dependent transport of viral capsid toward the nucleus. Mediates the viral genome import into the nucleus through binding to host importins. Once within the nucleus, L2 localizes viral genomes to host PML bodies in order to activate early gene expression for establishment of infection. Later on, promotes late gene expression by interacting with the viral E2 protein and by inhibiting its transcriptional activation functions. During virion assembly, encapsidates the genome by direct interaction with the viral DNA. This chain is Minor capsid protein L2, found in Bos taurus (Bovine).